A 126-amino-acid chain; its full sequence is Acyl carrier protein 2, mitochondrial (126 aa).

The N-terminal 36 residues, 1–36, are a transit peptide targeting the mitochondrion; sequence MAARGAMLRYLRVNVNPTIQNPRECVLPFSILLRRF. Residues 48–123 form the Carrier domain; that stretch reads SEVTDRVLSV…LAVDFIASHP (76 aa). Residue serine 83 is modified to O-(pantetheine 4'-phosphoryl)serine.

Belongs to the acyl carrier protein (ACP) family. In terms of assembly, complex I is composed of at least 49 different subunits. Post-translationally, 4'-phosphopantetheine is transferred from CoA to a specific serine of the apo-ACP-like protein.

It is found in the mitochondrion. The protein operates within lipid metabolism; fatty acid biosynthesis. In terms of biological role, carrier of the growing fatty acid chain in fatty acid biosynthesis. May be involved in the synthesis of short and medium chain fatty acids. Accessory and non-catalytic subunit of the mitochondrial membrane respiratory chain NADH dehydrogenase (Complex I), which functions in the transfer of electrons from NADH to the respiratory chain. The chain is Acyl carrier protein 2, mitochondrial (MTACP2) from Arabidopsis thaliana (Mouse-ear cress).